The primary structure comprises 635 residues: Allantoin permease (635 aa).

Topologically, residues 1-144 (MANDALSAIF…AGTGLQLGLN (144 aa)) are cytoplasmic. Residues 145-165 (WWQCWLTVWIGYTFAGIFVVL) form a helical membrane-spanning segment. Topologically, residues 166 to 174 (NSRFGSAYH) are extracellular. Residues 175–195 (LSFPITVRASFGIFFSMWPII) traverse the membrane as a helical segment. The Cytoplasmic portion of the chain corresponds to 196–198 (NRV). A helical membrane pass occupies residues 199 to 219 (VMAIVWYAVQAWLGATPVALM). The Extracellular portion of the chain corresponds to 220 to 243 (LKSIFGKNLEDRIPNHFGSPNSTT). The helical transmembrane segment at 244–264 (FEFMCFFIFWVVSIPFVLVAP) threads the bilayer. Over 265–269 (HKIRH) the chain is Cytoplasmic. The helical transmembrane segment at 270–290 (LFTVKAALIPFAAFGFLIWAL) threads the bilayer. Residues 291–311 (KKSHGKIELGTLNDYSPHGSE) are Extracellular-facing. The chain crosses the membrane as a helical span at residues 312 to 332 (FSWIFVRSLMACVANFAALII). Over 333-351 (NAPDFGRFAKNPQASLWPQ) the chain is Cytoplasmic. The chain crosses the membrane as a helical span at residues 352-372 (LVAIPLFFAITCLIGIIVTAA). Residues 373–401 (GYHLYGVNYWSPLDVLGQFLETTYTRGTR) lie on the Extracellular side of the membrane. The helical transmembrane segment at 402–422 (AGVFLISFVFALAQLGTNISA) threads the bilayer. The Cytoplasmic segment spans residues 423–443 (NSLACGADMTALFPRYINIRR). A helical membrane pass occupies residues 444-464 (GSLFCVAMALCICPWNLMASS). The Extracellular portion of the chain corresponds to 465–466 (SK). The chain crosses the membrane as a helical span at residues 467–487 (FTSALGAYAIFLSSIAGVICA). The Cytoplasmic segment spans residues 488–522 (DYFVVRRGYVKLTHLFLAQKGSFYMFGNKFGANWR). A helical transmembrane segment spans residues 523–543 (AFVAYICGIAPNLPGFIGDVG). The Extracellular portion of the chain corresponds to 544 to 560 (APKITVSEGAMRLYYLG). A helical transmembrane segment spans residues 561 to 581 (YPVGFFISAVIYLILCYFFPV). The Cytoplasmic segment spans residues 582-635 (PGTPVTNFLTEKGWFQRWAYVEDFEQDWKNELRRDDLCDDTVSIYDGTEEKIVY).

This sequence belongs to the purine-cytosine permease (2.A.39) family.

It localises to the membrane. Its function is as follows. Transport of allantoin. This chain is Allantoin permease (DAL4), found in Saccharomyces cerevisiae (strain ATCC 204508 / S288c) (Baker's yeast).